We begin with the raw amino-acid sequence, 260 residues long: uncharacterized protein (260 aa).

6 helical membrane passes run 39-59 (IFYLLFIPLSKNFIYTDLIEA), 68-88 (IIVGIYLSYPIFLYQIWSFLI), 111-131 (FLGSCIGYYLLFPIAFTFFLG), 159-179 (LIFSLSICFQLPVLILFLFKI), 193-213 (FIYLFFFILAAILSPPDILSQ), and 214-234 (FILVIPLILFFEISLFCIKLI).

This sequence belongs to the TatC family.

The protein resides in the mitochondrion membrane. This is an uncharacterized protein from Reclinomonas americana.